A 122-amino-acid chain; its full sequence is MARIAGVNIPTNKRVIIALQYIHGIGPKKAEEICEKVSIPPERRVVDLTDAEVLQIRETIDRDYIVEGDLRREVAINIKRLMDLGCYRGLRHRRQLPVRGQRTHTNARTRKGKAKPIAGKKK.

A disordered region spans residues glutamine 95–lysine 122.

The protein belongs to the universal ribosomal protein uS13 family. As to quaternary structure, part of the 30S ribosomal subunit. Forms a loose heterodimer with protein S19. Forms two bridges to the 50S subunit in the 70S ribosome.

Located at the top of the head of the 30S subunit, it contacts several helices of the 16S rRNA. In the 70S ribosome it contacts the 23S rRNA (bridge B1a) and protein L5 of the 50S subunit (bridge B1b), connecting the 2 subunits; these bridges are implicated in subunit movement. Contacts the tRNAs in the A and P-sites. The sequence is that of Small ribosomal subunit protein uS13 from Beijerinckia indica subsp. indica (strain ATCC 9039 / DSM 1715 / NCIMB 8712).